Reading from the N-terminus, the 575-residue chain is Suppressor of tumorigenicity 7 protein-like (575 aa).

2 helical membrane-spanning segments follow: residues 36–56 (GLAG…LYAL) and 80–100 (FYVA…IFEW). The segment at 125–147 (GTESSISEPGSPSRNRENETSRQ) is disordered. The segment covering 126-137 (TESSISEPGSPS) has biased composition (polar residues).

It belongs to the ST7 family.

Its subcellular location is the membrane. This is Suppressor of tumorigenicity 7 protein-like (ST7L) from Homo sapiens (Human).